The chain runs to 152 residues: Transcriptional regulator MraZ (152 aa).

SpoVT-AbrB domains are found at residues 5–52 and 81–124; these read ATLV…PLPE and ASEC…DETT.

The protein belongs to the MraZ family. In terms of assembly, forms oligomers.

It is found in the cytoplasm. The protein localises to the nucleoid. Its function is as follows. Negatively regulates its own expression and that of the subsequent genes in the proximal part of the division and cell wall (dcw) gene cluster. Acts by binding directly to DNA. May also regulate the expression of genes outside the dcw cluster. In Salmonella typhi, this protein is Transcriptional regulator MraZ.